Consider the following 674-residue polypeptide: Dymeclin (674 aa).

Gly2 carries N-myristoyl glycine lipidation.

It belongs to the dymeclin family. As to quaternary structure, interacts with GOLM1 and PPIB. In terms of processing, myristoylated in vitro; myristoylation is not essential for protein targeting to Golgi compartment.

It localises to the cytoplasm. It is found in the golgi apparatus. The protein resides in the membrane. Its function is as follows. Necessary for correct organization of Golgi apparatus. Involved in bone development. The chain is Dymeclin (Dym) from Rattus norvegicus (Rat).